Here is a 285-residue protein sequence, read N- to C-terminus: 4-diphosphocytidyl-2-C-methyl-D-erythritol kinase (285 aa).

Residue Lys12 is part of the active site. 95-105 (PMGGGVGGGSS) contributes to the ATP binding site. The active site involves Asp137.

This sequence belongs to the GHMP kinase family. IspE subfamily.

It catalyses the reaction 4-CDP-2-C-methyl-D-erythritol + ATP = 4-CDP-2-C-methyl-D-erythritol 2-phosphate + ADP + H(+). It functions in the pathway isoprenoid biosynthesis; isopentenyl diphosphate biosynthesis via DXP pathway; isopentenyl diphosphate from 1-deoxy-D-xylulose 5-phosphate: step 3/6. Functionally, catalyzes the phosphorylation of the position 2 hydroxy group of 4-diphosphocytidyl-2C-methyl-D-erythritol. This is 4-diphosphocytidyl-2-C-methyl-D-erythritol kinase from Actinobacillus pleuropneumoniae serotype 5b (strain L20).